The chain runs to 490 residues: Lysine--tRNA ligase (490 aa).

Mg(2+) contacts are provided by Glu398 and Glu405.

It belongs to the class-II aminoacyl-tRNA synthetase family. As to quaternary structure, homodimer. Mg(2+) serves as cofactor.

The protein resides in the cytoplasm. The catalysed reaction is tRNA(Lys) + L-lysine + ATP = L-lysyl-tRNA(Lys) + AMP + diphosphate. This chain is Lysine--tRNA ligase, found in Metamycoplasma arthritidis (strain 158L3-1) (Mycoplasma arthritidis).